We begin with the raw amino-acid sequence, 358 residues long: Methylthioribose-1-phosphate isomerase (358 aa).

Substrate-binding positions include 54 to 56 (RGA), R96, and Q205. D246 acts as the Proton donor in catalysis. Position 256 to 257 (256 to 257 (NK)) interacts with substrate.

Belongs to the eIF-2B alpha/beta/delta subunits family. MtnA subfamily.

The catalysed reaction is 5-(methylsulfanyl)-alpha-D-ribose 1-phosphate = 5-(methylsulfanyl)-D-ribulose 1-phosphate. Its pathway is amino-acid biosynthesis; L-methionine biosynthesis via salvage pathway; L-methionine from S-methyl-5-thio-alpha-D-ribose 1-phosphate: step 1/6. Catalyzes the interconversion of methylthioribose-1-phosphate (MTR-1-P) into methylthioribulose-1-phosphate (MTRu-1-P). The sequence is that of Methylthioribose-1-phosphate isomerase from Pseudomonas aeruginosa (strain UCBPP-PA14).